The chain runs to 594 residues: Kelch domain-containing protein 7B (594 aa).

A disordered region spans residues 1–174 (MVLRSHPFPR…PAGRSGALTE (174 aa)). The span at 49-58 (IGTGTGGLVE) shows a compositional bias: gly residues. A compositionally biased stretch (polar residues) spans 64-74 (QPRSSETNGSP). Residues 104 to 115 (PAQPPAQRPPGP) are compositionally biased toward pro residues. Low complexity predominate over residues 116 to 126 (AASSSARRSQP). Kelch repeat units lie at residues 306–354 (EEPP…TMHN), 355–405 (YLFL…ALDG), 406–448 (LLYA…AVAC), 451–493 (DIYV…ALGG), and 495–538 (LYRF…TTLG).

The polypeptide is Kelch domain-containing protein 7B (KLHDC7B) (Homo sapiens (Human)).